A 796-amino-acid chain; its full sequence is MSRRRHSDGDDGGQSHKRRRTSEPVEIEDRLESLICRVGEKSTSSLESNLEGLAGVLEADLPNYKNKILRILCAVARLLPEKLTVYTTLVGLLNARNYNFGGEFVEAMIRQLKETLKANLYTDALYLVRFLCDLVNCHVIAAPSMVAMFENFVSVTQEEDVPQVRSDWFVYAVLSSLPWVGKELDEKKDVEMDRLLNQIDGYLKRRLKTHVPMLQVWTAEKPHPQEEYLDCLYAQIQKLKKDRWQERHILRPYIAFDSVLCEALQHNLPPFTPPAHMPDCQYPMPRVIFRMFDYTDAPEGPVMPGSHSVERFVIEDNLHNIIKSHWKERKTCAAQLLSYPGKNKIPLNYHIVEVIFGELFQLPCPPHIDVMYTTLLIELCKLQPGSLPQVLAQATEMMYVRLDTMNTICIDRLLNWFSHHLSNFQFRWSWDDWVDCLALDADKPKPKFVKEVLEKCMRLSYHQRIVDIVPPTFSGLIPADPIFFYKYQDEANSALPGYAVAIAVGNAIKNRASNEEILTVLKDVPNPNQEDDDDEGEGFNPLKIEVFLQTLLHLAAKSFSHSFSALAKFHEILKALTDCDEGKLHILRVVYEVWKNHPQMVSVLVDKLIRTQIVDCAAVANWLFSPSMAHEFTRFYVWEILHSTIRKMNKHVQKIQKELEEAKDKLERQQHKKQKDSGDEEDMEKNSEDEDGQLEEQIERLQEKVESAQSEQKNLFLVIFQRFIMMLTEHLVRCETGSVDFSTPWYKNCIERLQQIFLMHHVTIQQYMGTLENLLFTAELDHHILAVYQQFCALQL.

The interval M1 to E26 is disordered. Residues E28 to K240 enclose the MIF4G domain. A coiled-coil region spans residues L641 to I719. The interval D664–E695 is disordered. Positions G678–E695 are enriched in acidic residues.

This sequence belongs to the NCBP1 family. Component of the nuclear cap-binding complex (CBC), a heterodimer composed of ncbp1/cbp80 and ncbp2/cbp20 that interacts with m7GpppG-capped RNA. Component of an alternative nuclear cap-binding complex (CBC) composed of ncbp1/cbp80 and ncbp3.

Its subcellular location is the nucleus. The protein resides in the cytoplasm. Component of the cap-binding complex (CBC), which binds cotranscriptionally to the 5'-cap of pre-mRNAs and is involved in various processes such as pre-mRNA splicing, translation regulation, nonsense-mediated mRNA decay, RNA-mediated gene silencing (RNAi) by microRNAs (miRNAs) and mRNA export. The CBC complex is involved in mRNA export from the nucleus, leading to the recruitment of the mRNA export machinery to the 5'-end of mRNA and to mRNA export in a 5' to 3' direction through the nuclear pore. The CBC complex is also involved in mediating U snRNA and intronless mRNAs export from the nucleus. The CBC complex is essential for a pioneer round of mRNA translation, before steady state translation when the CBC complex is replaced by cytoplasmic cap-binding protein eIF4E. The pioneer round of mRNA translation mediated by the CBC complex plays a central role in nonsense-mediated mRNA decay (NMD), NMD only taking place in mRNAs bound to the CBC complex, but not on eIF4E-bound mRNAs. The CBC complex enhances NMD in mRNAs containing at least one exon-junction complex (EJC), promoting the interaction between UPF1 and UPF2. The CBC complex is also involved in 'failsafe' NMD, which is independent of the EJC complex, while it does not participate in Staufen-mediated mRNA decay (SMD). During cell proliferation, the CBC complex is also involved in microRNAs (miRNAs) biogenesis via its interaction with SRRT/ARS2 and is required for miRNA-mediated RNA interference. The CBC complex also acts as a negative regulator of parn, thereby acting as an inhibitor of mRNA deadenylation. In the CBC complex, ncbp1/cbp80 does not bind directly capped RNAs (m7GpppG-capped RNA) but is required to stabilize the movement of the N-terminal loop of ncbp2/cbp20 and lock the CBC into a high affinity cap-binding state with the cap structure. Associates with NCBP3 to form an alternative cap-binding complex (CBC) which plays a key role in mRNA export. The conventional CBC with NCBP2 binds both small nuclear RNA (snRNA) and messenger (mRNA) and is involved in their export from the nucleus whereas the alternative CBC with NCBP3 does not bind snRNA and associates only with mRNA thereby playing a role only in mRNA export. This chain is Nuclear cap-binding protein subunit 1 (ncbp1), found in Salmo salar (Atlantic salmon).